The sequence spans 386 residues: S-adenosylmethionine synthase (386 aa).

H17 is a binding site for ATP. D19 lines the Mg(2+) pocket. E45 contacts K(+). 2 residues coordinate L-methionine: E58 and Q101. The segment at 101-111 (QSPDISQGVTE) is flexible loop. ATP-binding positions include 168–170 (DAK), D242, 248–249 (RK), A265, and K269. D242 is a binding site for L-methionine. Position 273 (K273) interacts with L-methionine.

This sequence belongs to the AdoMet synthase family. In terms of assembly, homotetramer; dimer of dimers. Mg(2+) serves as cofactor. K(+) is required as a cofactor.

It is found in the cytoplasm. It catalyses the reaction L-methionine + ATP + H2O = S-adenosyl-L-methionine + phosphate + diphosphate. Its pathway is amino-acid biosynthesis; S-adenosyl-L-methionine biosynthesis; S-adenosyl-L-methionine from L-methionine: step 1/1. Its function is as follows. Catalyzes the formation of S-adenosylmethionine (AdoMet) from methionine and ATP. The overall synthetic reaction is composed of two sequential steps, AdoMet formation and the subsequent tripolyphosphate hydrolysis which occurs prior to release of AdoMet from the enzyme. The sequence is that of S-adenosylmethionine synthase from Leptospira interrogans serogroup Icterohaemorrhagiae serovar copenhageni (strain Fiocruz L1-130).